The sequence spans 720 residues: Polyribonucleotide nucleotidyltransferase (720 aa).

2 residues coordinate Mg(2+): Asp486 and Asp492. The KH domain occupies 553–612; sequence PRITVINVPKEKIREVIGTGGKVIREIVEFSGAKIDIEDDGTIKIASTSEESTQKAIDRI. The S1 motif domain maps to 622–690; it reads GKIYNGKVVK…DRGKVKLSMR (69 aa). The tract at residues 698-720 is disordered; the sequence is EDISDKVGPKGGRGGRGEGDLAE.

This sequence belongs to the polyribonucleotide nucleotidyltransferase family. Mg(2+) serves as cofactor.

It is found in the cytoplasm. It carries out the reaction RNA(n+1) + phosphate = RNA(n) + a ribonucleoside 5'-diphosphate. Involved in mRNA degradation. Catalyzes the phosphorolysis of single-stranded polyribonucleotides processively in the 3'- to 5'-direction. This is Polyribonucleotide nucleotidyltransferase from Granulibacter bethesdensis (strain ATCC BAA-1260 / CGDNIH1).